The chain runs to 353 residues: Putative permease PerM (353 aa).

Helical transmembrane passes span 19–39 (IALLVILVAGFGIIFFFSGLL), 72–92 (IVLVVFVGILLLMAFVVLPIA), 156–176 (LVGLLTIAVYLVLVPLMVFFL), 217–237 (VLEMIVVGIATWLGFLLFGLN), 240–260 (LLLAVLVGFSVLIPYIGAFVV), 281–301 (CFAVYLIIQALDGNLLVPVLF), and 310–330 (LVIILSVVIFGGLWGFWGVFF).

It belongs to the autoinducer-2 exporter (AI-2E) (TC 2.A.86) family.

The protein resides in the cell membrane. The protein is Putative permease PerM (perM) of Escherichia coli O157:H7.